A 191-amino-acid chain; its full sequence is MEKNQRKKRSDAEYNQQIILTTMEDLLEQGEDISTKKMSDIAKISGVGVGTLYRHFESKTLLCQAIMDKKVDQMFIEIEDILAENTQWPVRDKINVILTKYLDLKEANFTTLNFIEKSSSHSSSVINIPFFERLKNLLIQQFENVHSIADLDFKLNLMLNAFSSDFYYFVKHNQKLTKQQFLDKLLDLYLK.

The HTH tetR-type domain occupies 12-74 (AEYNQQIILT…AIMDKKVDQM (63 aa)). Positions 37 to 56 (KMSDIAKISGVGVGTLYRHF) form a DNA-binding region, H-T-H motif.

This Staphylococcus aureus (strain MRSA252) protein is HTH-type transcriptional regulator SAR0097.